The primary structure comprises 632 residues: tRNA 5-methylaminomethyl-2-thiouridine biosynthesis bifunctional protein MnmC (632 aa).

Residues 1-247 (MNSRIFPAAM…KWHMTLGQRL (247 aa)) form a tRNA (mnm(5)s(2)U34)-methyltransferase region. The segment at 267-632 (VGAGLAGAAV…TDLLAQIAPR (366 aa)) is FAD-dependent cmnm(5)s(2)U34 oxidoreductase.

In the N-terminal section; belongs to the methyltransferase superfamily. tRNA (mnm(5)s(2)U34)-methyltransferase family. This sequence in the C-terminal section; belongs to the DAO family. FAD serves as cofactor.

Its subcellular location is the cytoplasm. The catalysed reaction is 5-aminomethyl-2-thiouridine(34) in tRNA + S-adenosyl-L-methionine = 5-methylaminomethyl-2-thiouridine(34) in tRNA + S-adenosyl-L-homocysteine + H(+). Catalyzes the last two steps in the biosynthesis of 5-methylaminomethyl-2-thiouridine (mnm(5)s(2)U) at the wobble position (U34) in tRNA. Catalyzes the FAD-dependent demodification of cmnm(5)s(2)U34 to nm(5)s(2)U34, followed by the transfer of a methyl group from S-adenosyl-L-methionine to nm(5)s(2)U34, to form mnm(5)s(2)U34. The polypeptide is tRNA 5-methylaminomethyl-2-thiouridine biosynthesis bifunctional protein MnmC (Bordetella bronchiseptica (strain ATCC BAA-588 / NCTC 13252 / RB50) (Alcaligenes bronchisepticus)).